The sequence spans 606 residues: NADH-ubiquinone oxidoreductase chain 5 (606 aa).

The next 16 membrane-spanning stretches (helical) occupy residues 1 to 21 (MNPF…PIMM), 43 to 63 (AFTL…EMII), 87 to 107 (VMFI…SMWY), 112 to 132 (PFIN…MILV), 137 to 157 (LFQL…LIGW), 171 to 191 (AILY…WFLT), 213 to 233 (LIGL…HPWL), 241 to 261 (TPVS…FLLI), 273 to 293 (VQTM…LCAI), 301 to 321 (IVAF…GINQ), 324 to 344 (LAFL…MCSG), 366 to 386 (MPFT…MPYL), 407 to 429 (WALL…IIFF), 457 to 477 (LLIG…PMTV), 482 to 502 (MPLY…MLAL), and 582 to 602 (GLIK…MTLF).

It belongs to the complex I subunit 5 family. In terms of assembly, core subunit of respiratory chain NADH dehydrogenase (Complex I) which is composed of 45 different subunits.

Its subcellular location is the mitochondrion inner membrane. The catalysed reaction is a ubiquinone + NADH + 5 H(+)(in) = a ubiquinol + NAD(+) + 4 H(+)(out). Its function is as follows. Core subunit of the mitochondrial membrane respiratory chain NADH dehydrogenase (Complex I) which catalyzes electron transfer from NADH through the respiratory chain, using ubiquinone as an electron acceptor. Essential for the catalytic activity and assembly of complex I. This Sus scrofa (Pig) protein is NADH-ubiquinone oxidoreductase chain 5 (MT-ND5).